We begin with the raw amino-acid sequence, 182 residues long: Biotin transporter BioY2 (182 aa).

Transmembrane regions (helical) follow at residues 12-32 (IALG…IGIV), 54-74 (FFAI…FTGG), 78-98 (IAVL…MGTL), 111-131 (IPAF…GTLW), and 150-170 (PFVF…LALI).

It belongs to the BioY family. In E.coli forms a stable energy-coupling factor (ECF) transporter complex composed of 2 membrane-embedded substrate-binding protein (S component), 2 ATP-binding proteins (A and A' components) and 2 transmembrane proteins (T component), probably with a stoichiometry of 2:1:1:2. May be able to interact with more than 1 S component at a time.

It is found in the cell membrane. Functionally, probably a biotin-binding protein that interacts with the energy-coupling factor (ECF) ABC-transporter complex. Unlike classic ABC transporters this ECF transporter provides the energy necessary to transport a number of different substrates. The substrates themselves are bound by transmembrane, not extracytoplasmic soluble proteins. The protein is Biotin transporter BioY2 (bioY2) of Lactococcus lactis subsp. cremoris (strain MG1363).